The sequence spans 808 residues: Protein NLP5 (808 aa).

Polar residues predominate over residues 56–68 (PTQDTSNSLSQMY). The interval 56-83 (PTQDTSNSLSQMYGQDCPERSSLEDQNQ) is disordered. An RWP-RK domain is found at 536–617 (NRVTEKKRTK…IDSVEGVSGH (82 aa)). The interval 660–680 (SPGSSCSHSSSCSSETQVIKE) is disordered. Over residues 663 to 673 (SSCSHSSSCSS) the composition is skewed to low complexity. In terms of domain architecture, PB1 spans 710 to 793 (FLRVKVSYEE…QTIKLLLQLS (84 aa)).

The protein resides in the nucleus. Functionally, probable transcription factor. This Arabidopsis thaliana (Mouse-ear cress) protein is Protein NLP5 (NLP5).